Reading from the N-terminus, the 418-residue chain is Homoaconitase large subunit (418 aa).

Residues cysteine 292, cysteine 352, and cysteine 355 each coordinate [4Fe-4S] cluster.

It belongs to the aconitase/IPM isomerase family. In terms of assembly, heterodimer of HacA and HacB. It depends on [4Fe-4S] cluster as a cofactor.

The catalysed reaction is (2R,3S)-homoisocitrate = cis-homoaconitate + H2O. It functions in the pathway amino-acid biosynthesis; L-lysine biosynthesis via AAA pathway; L-alpha-aminoadipate from 2-oxoglutarate: step 3/5. With respect to regulation, is not inhibited by lysine. Its function is as follows. Catalyzes the reversible hydration of cis-homoaconitate ((Z)-but-1-ene-1,2,4-tricarboxylate) to homoisocitrate ((1R,2S)-1-hydroxybutane-1,2,4-tricarboxylate). Can catalyze neither the dehydration of (R)-homocitrate ((2R)-2-hydroxybutane-1,2,4-tricarboxylate) into cis-homoaconitate in vitro, nor the reverse reaction. Is not active toward (S)-homocitrate, cis-aconitate or citrate as substrate. This is Homoaconitase large subunit (hacA) from Thermus thermophilus (strain ATCC BAA-163 / DSM 7039 / HB27).